We begin with the raw amino-acid sequence, 185 residues long: Putative manganese efflux pump MntP (185 aa).

Transmembrane regions (helical) follow at residues 3 to 23 (PFAV…VSVG), 41 to 61 (AVFG…GVAA), 70 to 90 (HWLA…AAVW), 101 to 121 (SFTV…AVGV), 123 to 143 (LAFL…ATFL), and 165 to 185 (AVAG…HLTA).

This sequence belongs to the MntP (TC 9.B.29) family.

The protein localises to the cell inner membrane. In terms of biological role, probably functions as a manganese efflux pump. This chain is Putative manganese efflux pump MntP, found in Bradyrhizobium sp. (strain BTAi1 / ATCC BAA-1182).